The chain runs to 131 residues: MKKSGILNSEVASVVAGMGHMDWLSIGDAGMPVPMGTKKIDLCVDKELPTFMQILENVLKEMKIQKIYLADEIKDQNPEQLENIKQALPDVEIEFMPHTDLKKNLAKTHAFIRTGEMTPYSNIILESGVTF.

Catalysis depends on His-20, which acts as the Proton donor. Substrate is bound by residues Asp-28, His-98, and Tyr-120–Asn-122.

Belongs to the RbsD / FucU family. RbsD subfamily. In terms of assembly, homodecamer.

Its subcellular location is the cytoplasm. The catalysed reaction is beta-D-ribopyranose = beta-D-ribofuranose. The protein operates within carbohydrate metabolism; D-ribose degradation; D-ribose 5-phosphate from beta-D-ribopyranose: step 1/2. In terms of biological role, catalyzes the interconversion of beta-pyran and beta-furan forms of D-ribose. The chain is D-ribose pyranase from Limosilactobacillus fermentum (strain NBRC 3956 / LMG 18251) (Lactobacillus fermentum).